The sequence spans 181 residues: Peptide deformylase (181 aa).

2 residues coordinate Fe cation: Cys-103 and His-145. Residue Glu-146 is part of the active site. His-149 lines the Fe cation pocket.

The protein belongs to the polypeptide deformylase family. Requires Fe(2+) as cofactor.

The catalysed reaction is N-terminal N-formyl-L-methionyl-[peptide] + H2O = N-terminal L-methionyl-[peptide] + formate. Its function is as follows. Removes the formyl group from the N-terminal Met of newly synthesized proteins. Requires at least a dipeptide for an efficient rate of reaction. N-terminal L-methionine is a prerequisite for activity but the enzyme has broad specificity at other positions. The polypeptide is Peptide deformylase (Orientia tsutsugamushi (strain Ikeda) (Rickettsia tsutsugamushi)).